We begin with the raw amino-acid sequence, 154 residues long: Transcriptional repressor NrdR (154 aa).

Positions 1-22 (MECPNCHKNASRVIDSRPSDEN) are disordered. The segment at 3–34 (CPNCHKNASRVIDSRPSDENRAIRRRRECENC) is a zinc-finger region. The region spanning 49-139 (LLVVKNDGTR…IYRQFKDVSG (91 aa)) is the ATP-cone domain.

The protein belongs to the NrdR family. Zn(2+) is required as a cofactor.

Its function is as follows. Negatively regulates transcription of bacterial ribonucleotide reductase nrd genes and operons by binding to NrdR-boxes. The protein is Transcriptional repressor NrdR of Lactobacillus johnsonii (strain CNCM I-12250 / La1 / NCC 533).